The primary structure comprises 404 residues: MSQSRYFFTSESVSEGHPDKVSDQISDAVLDEFIRQDPDSRVACETFVTTGQVIVGGEVTTKGVVDVQTIARKVITEIGYTKGEYMFDAHSCGVLSALHSQSPDINRGVDRKEEISDELDRVGAGDQGMMFGYACTETPELMPAALQFAQQLVKKLAEIRKEGKIMTYLRPDAKSQVTLEYVDEQVKRVDAVVVSTQHDPEPEGVSEAEWQAVIKKDIIENVINVVIPAALLDEKTKLHINPTGRFVIGGPHGDTGLTGRKIIVDTYGGAAPHGGGAFSGKDPSKVDRSAAYASRHVAKNIVAAGLADKCTVQVSYAIGVAQPVSIYINTHGTAKHGLTDAEIQEKAEVIFDLRPASIIKRFGLNKPEGWCYQETAAYGHFGRENFPWERTEKVEELKKALNVA.

The span at 1–13 (MSQSRYFFTSESV) shows a compositional bias: polar residues. Positions 1-21 (MSQSRYFFTSESVSEGHPDKV) are disordered. His17 contacts ATP. Position 19 (Asp19) interacts with Mg(2+). Glu45 serves as a coordination point for K(+). The L-methionine site is built by Glu58 and Gln101. The tract at residues 101 to 111 (QSPDINRGVDR) is flexible loop. ATP-binding positions include 172–174 (DAK), 245–246 (RF), Asp254, 260–261 (RK), Ala277, and Lys281. Residue Asp254 coordinates L-methionine. Lys285 contributes to the L-methionine binding site.

This sequence belongs to the AdoMet synthase family. As to quaternary structure, homotetramer; dimer of dimers. The cofactor is Mg(2+). K(+) is required as a cofactor.

The protein localises to the cytoplasm. It carries out the reaction L-methionine + ATP + H2O = S-adenosyl-L-methionine + phosphate + diphosphate. Its pathway is amino-acid biosynthesis; S-adenosyl-L-methionine biosynthesis; S-adenosyl-L-methionine from L-methionine: step 1/1. Its function is as follows. Catalyzes the formation of S-adenosylmethionine (AdoMet) from methionine and ATP. The overall synthetic reaction is composed of two sequential steps, AdoMet formation and the subsequent tripolyphosphate hydrolysis which occurs prior to release of AdoMet from the enzyme. The chain is S-adenosylmethionine synthase from Chlorobium phaeobacteroides (strain DSM 266 / SMG 266 / 2430).